The primary structure comprises 422 residues: S100P-binding protein (422 aa).

Disordered stretches follow at residues 1 to 28 (MMCS…SWSS), 61 to 135 (LKDD…TPAK), and 170 to 292 (YVSE…DSGK). Basic and acidic residues predominate over residues 80 to 90 (DDSRNVEKGEK). Ser-195 is subject to Phosphoserine. A compositionally biased stretch (basic and acidic residues) spans 231–241 (VSDKNMSDSKK). Over residues 255-269 (TPNTGSSRRNGSYKS) the composition is skewed to polar residues. Residues 274 to 283 (KLPVSSSSSK) show a composition bias toward low complexity.

In terms of assembly, interacts with S100P.

The protein resides in the nucleus. The chain is S100P-binding protein from Bos taurus (Bovine).